The following is a 191-amino-acid chain: Elongation factor P (191 aa).

It belongs to the elongation factor P family.

The protein localises to the cytoplasm. It functions in the pathway protein biosynthesis; polypeptide chain elongation. Its function is as follows. Involved in peptide bond synthesis. Stimulates efficient translation and peptide-bond synthesis on native or reconstituted 70S ribosomes in vitro. Probably functions indirectly by altering the affinity of the ribosome for aminoacyl-tRNA, thus increasing their reactivity as acceptors for peptidyl transferase. The chain is Elongation factor P from Bartonella henselae (strain ATCC 49882 / DSM 28221 / CCUG 30454 / Houston 1) (Rochalimaea henselae).